The primary structure comprises 466 residues: Methylenetetrahydrofolate--tRNA-(uracil-5-)-methyltransferase TrmFO (466 aa).

14-19 contacts FAD; the sequence is GGGLAG.

It belongs to the MnmG family. TrmFO subfamily. FAD is required as a cofactor.

It is found in the cytoplasm. It carries out the reaction uridine(54) in tRNA + (6R)-5,10-methylene-5,6,7,8-tetrahydrofolate + NADH + H(+) = 5-methyluridine(54) in tRNA + (6S)-5,6,7,8-tetrahydrofolate + NAD(+). It catalyses the reaction uridine(54) in tRNA + (6R)-5,10-methylene-5,6,7,8-tetrahydrofolate + NADPH + H(+) = 5-methyluridine(54) in tRNA + (6S)-5,6,7,8-tetrahydrofolate + NADP(+). In terms of biological role, catalyzes the folate-dependent formation of 5-methyl-uridine at position 54 (M-5-U54) in all tRNAs. The sequence is that of Methylenetetrahydrofolate--tRNA-(uracil-5-)-methyltransferase TrmFO from Brucella suis (strain ATCC 23445 / NCTC 10510).